The primary structure comprises 673 residues: UvrABC system protein B (673 aa).

The region spanning 26 to 183 (EGLEDGLAHQ…RRLAELQYAR (158 aa)) is the Helicase ATP-binding domain. 39–46 (GVTGSGKT) provides a ligand contact to ATP. Residues 92-115 (YYDYYQPEAYVPSSDTFIEKDASV) carry the Beta-hairpin motif. Residues 431 to 597 (QVDDLLSEIR…GLNKKVVDIL (167 aa)) enclose the Helicase C-terminal domain. The tract at residues 608-627 (AKGRGKSRPIVEPDNVPMDM) is disordered. A UVR domain is found at 633-668 (QQKIHELEGLMMQHAQNLEFEEAAQIRDQLHLLREL).

It belongs to the UvrB family. Forms a heterotetramer with UvrA during the search for lesions. Interacts with UvrC in an incision complex.

The protein localises to the cytoplasm. The UvrABC repair system catalyzes the recognition and processing of DNA lesions. A damage recognition complex composed of 2 UvrA and 2 UvrB subunits scans DNA for abnormalities. Upon binding of the UvrA(2)B(2) complex to a putative damaged site, the DNA wraps around one UvrB monomer. DNA wrap is dependent on ATP binding by UvrB and probably causes local melting of the DNA helix, facilitating insertion of UvrB beta-hairpin between the DNA strands. Then UvrB probes one DNA strand for the presence of a lesion. If a lesion is found the UvrA subunits dissociate and the UvrB-DNA preincision complex is formed. This complex is subsequently bound by UvrC and the second UvrB is released. If no lesion is found, the DNA wraps around the other UvrB subunit that will check the other stand for damage. This Escherichia coli O81 (strain ED1a) protein is UvrABC system protein B.